The chain runs to 111 residues: Probable 4-amino-4-deoxy-L-arabinose-phosphoundecaprenol flippase subunit ArnE (111 aa).

3 helical membrane passes run 38-58 (LWLG…LLVL), 61-81 (LPVG…TLAA), and 89-109 (VLPR…ILGS). Residues 40–109 (LGLALICMGA…IISGIIILGS (70 aa)) enclose the EamA domain.

The protein belongs to the ArnE family. As to quaternary structure, heterodimer of ArnE and ArnF.

The protein localises to the cell inner membrane. The protein operates within bacterial outer membrane biogenesis; lipopolysaccharide biosynthesis. Functionally, translocates 4-amino-4-deoxy-L-arabinose-phosphoundecaprenol (alpha-L-Ara4N-phosphoundecaprenol) from the cytoplasmic to the periplasmic side of the inner membrane. The chain is Probable 4-amino-4-deoxy-L-arabinose-phosphoundecaprenol flippase subunit ArnE from Salmonella paratyphi A (strain ATCC 9150 / SARB42).